The chain runs to 69 residues: MRAIISLLLISAMVFSMIEAVPVEEGLQLFEGERGGCLPRNKFCNPSSGPRCCSGLTCKELNIWASKCL.

The signal sequence occupies residues 1 to 20; sequence MRAIISLLLISAMVFSMIEA. The propeptide occupies 21 to 34; sequence VPVEEGLQLFEGER. 3 disulfides stabilise this stretch: C37–C53, C44–C58, and C52–C68.

The protein belongs to the neurotoxin 01 (U2-agtx) family. As to expression, expressed by the venom gland.

The protein localises to the secreted. Insect active toxin causing rapid but reversible paralysis in crickets. No activity shown in mammals. Does not show effect on mammalian voltage-gated calcium channels. This is U2-agatoxin-Ao1w from Agelena orientalis (Funnel-web spider).